Here is a 190-residue protein sequence, read N- to C-terminus: Threonylcarbamoyl-AMP synthase (190 aa).

The region spanning 7-190 (NFVLADIVRA…ALTGKRFRQG (184 aa)) is the YrdC-like domain.

It belongs to the SUA5 family. TsaC subfamily.

It is found in the cytoplasm. It carries out the reaction L-threonine + hydrogencarbonate + ATP = L-threonylcarbamoyladenylate + diphosphate + H2O. In terms of biological role, required for the formation of a threonylcarbamoyl group on adenosine at position 37 (t(6)A37) in tRNAs that read codons beginning with adenine. Catalyzes the conversion of L-threonine, HCO(3)(-)/CO(2) and ATP to give threonylcarbamoyl-AMP (TC-AMP) as the acyladenylate intermediate, with the release of diphosphate. The sequence is that of Threonylcarbamoyl-AMP synthase from Yersinia pestis bv. Antiqua (strain Angola).